Reading from the N-terminus, the 299-residue chain is Protein phosphatase 1 regulatory subunit 3D (299 aa).

Residues 1-22 form a disordered region; the sequence is MSRGPSSAVLPSALGSRKLGPR. 3 positions are modified to phosphoserine: S23, S25, and S28. The interval 37–94 is disordered; sequence EPRACRPPGSPGRAPPPTPAPSGCDPRLRPIILRRARSLPSSPERRQKAAGAPGAACR. Pro residues predominate over residues 44–56; sequence PGSPGRAPPPTPA. A compositionally biased stretch (low complexity) spans 57-67; the sequence is PSGCDPRLRPI. S74 carries the post-translational modification Phosphoserine. Residues 85 to 94 are compositionally biased toward low complexity; sequence AAGAPGAACR. The short motif at 101-104 is the PP1-binding motif element; sequence LRVR. S133 is subject to Phosphoserine. The region spanning 169-278 is the CBM21 domain; that stretch reads GERLQRQLVC…NNDHRDYSLT (110 aa).

In terms of assembly, interacts with PPP1CC catalytic subunit of PP1, and associates with glycogen. Interacts with EPM2A; in the presence of NHLC1/malin the interaction leads to PPP1R3D ubiquitination and autophagic degradation. In terms of tissue distribution, expressed in all tissues tested. High expression in skeletal muscle and heart.

In terms of biological role, seems to act as a glycogen-targeting subunit for PP1. PP1 is essential for cell division, and participates in the regulation of glycogen metabolism, muscle contractility and protein synthesis. This chain is Protein phosphatase 1 regulatory subunit 3D (PPP1R3D), found in Homo sapiens (Human).